We begin with the raw amino-acid sequence, 183 residues long: Capsid protein (183 aa).

Residues 136–183 (NAPILSTLPETTVVRRRGRSPRRRTPSPRRRRSQSPRRRRSQSPASQC) form a disordered region. Residues 149-176 (VRRRGRSPRRRTPSPRRRRSQSPRRRRS) show a composition bias toward basic residues. Residues Ser155, Ser162, and Ser170 each carry the phosphoserine; by host modification. The stretch at 155–161 (SPRRRTP) is one 1; half-length repeat. The segment at 155-177 (SPRRRTPSPRRRRSQSPRRRRSQ) is 3 X 8 AA repeats of S-P-R-R-R-[PR]-S-Q. The short motif at 158-175 (RRTPSPRRRRSQSPRRRR) is the Bipartite nuclear localization signal element. 2 repeat units span residues 162–169 (SPRRRRSQ) and 170–177 (SPRRRRSQ). The segment at 177-183 (QSPASQC) is RNA binding.

Belongs to the orthohepadnavirus core antigen family. Homodimerizes, then multimerizes. Interacts with cytosol exposed regions of viral L glycoprotein present in the reticulum-to-Golgi compartment. Interacts with human FLNB. Phosphorylated form interacts with host importin alpha; this interaction depends on the exposure of the NLS, which itself depends upon genome maturation and/or phosphorylation of the capsid protein. Interacts with host NUP153. Post-translationally, phosphorylated by host SRPK1, SRPK2, and maybe protein kinase C or GAPDH. Phosphorylation is critical for pregenomic RNA packaging. Protein kinase C phosphorylation is stimulated by HBx protein and may play a role in transport of the viral genome to the nucleus at the late step during the viral replication cycle.

The protein resides in the virion. It is found in the host cytoplasm. In terms of biological role, self assembles to form an icosahedral capsid. Most capsids appear to be large particles with an icosahedral symmetry of T=4 and consist of 240 copies of capsid protein, though a fraction forms smaller T=3 particles consisting of 180 capsid proteins. Entering capsids are transported along microtubules to the nucleus. Phosphorylation of the capsid is thought to induce exposure of nuclear localization signal in the C-terminal portion of the capsid protein that allows binding to the nuclear pore complex via the importin (karyopherin-) alpha and beta. Capsids are imported in intact form through the nuclear pore into the nuclear basket, where it probably binds NUP153. Only capsids that contain the mature viral genome can release the viral DNA and capsid protein into the nucleoplasm. Immature capsids get stuck in the basket. Capsids encapsulate the pre-genomic RNA and the P protein. Pre-genomic RNA is reverse-transcribed into DNA while the capsid is still in the cytoplasm. The capsid can then either be directed to the nucleus, providing more genomes for transcription, or bud through the endoplasmic reticulum to provide new virions. The sequence is that of Capsid protein from Pan troglodytes (Chimpanzee).